We begin with the raw amino-acid sequence, 813 residues long: Envelope glycoprotein H (813 aa).

The first 18 residues, 1-18, serve as a signal peptide directing secretion; that stretch reads MGLPGSIVFLIMIHAFCA. Residues 19 to 769 lie on the Virion surface side of the membrane; the sequence is KKTPTNTLPS…ESERVTIISA (751 aa). 2 N-linked (GlcNAc...) asparagine; by host glycosylation sites follow: N62 and N116. The tract at residues 135-159 is disordered; sequence DRSGLKLDDKDDAQPTGTNPPTELK. Positions 137 to 147 are enriched in basic and acidic residues; that stretch reads SGLKLDDKDDA. An interaction with gL region spans residues 212–273; it reads DGAEVIMKIG…FTRRPYLIYL (62 aa). 8 N-linked (GlcNAc...) asparagine; by host glycosylation sites follow: N247, N279, N410, N434, N469, N576, N727, and N750. A helical membrane pass occupies residues 770-790; the sequence is TYVATATAGASIAISIAIITV. Residues 791–813 lie on the Intravirion side of the membrane; sequence RMIINNFRYNYHRYKKLSLYDDL.

This sequence belongs to the herpesviridae glycoprotein H family. As to quaternary structure, interacts with glycoprotein L (gL); this interaction is necessary for the correct processing and cell surface expression of gH. The heterodimer gH/gL seems to interact with gB trimers during fusion. Post-translationally, N-glycosylated, O-glycosylated, and sialylated.

Its subcellular location is the virion membrane. The protein resides in the host cell membrane. It localises to the host endosome membrane. Its function is as follows. The heterodimer glycoprotein H-glycoprotein L is required for the fusion of viral and plasma membranes leading to virus entry into the host cell. Following initial binding to host receptor, membrane fusion is mediated by the fusion machinery composed of gB and the heterodimer gH/gL. May also be involved in the fusion between the virion envelope and the outer nuclear membrane during virion morphogenesis. This is Envelope glycoprotein H from Gallus gallus (Chicken).